The sequence spans 300 residues: tRNA dimethylallyltransferase (300 aa).

An ATP-binding site is contributed by G18 to S25. T20–S25 is a substrate binding site. Positions D43–Q46 are interaction with substrate tRNA.

It belongs to the IPP transferase family. Monomer. Mg(2+) is required as a cofactor.

The catalysed reaction is adenosine(37) in tRNA + dimethylallyl diphosphate = N(6)-dimethylallyladenosine(37) in tRNA + diphosphate. Functionally, catalyzes the transfer of a dimethylallyl group onto the adenine at position 37 in tRNAs that read codons beginning with uridine, leading to the formation of N6-(dimethylallyl)adenosine (i(6)A). The sequence is that of tRNA dimethylallyltransferase from Cyanothece sp. (strain PCC 7425 / ATCC 29141).